Here is a 553-residue protein sequence, read N- to C-terminus: Dihydroxy-acid dehydratase (553 aa).

Residue aspartate 78 participates in Mg(2+) binding. Cysteine 119 contacts [2Fe-2S] cluster. Mg(2+) is bound by residues aspartate 120 and lysine 121. An N6-carboxylysine modification is found at lysine 121. [2Fe-2S] cluster is bound at residue cysteine 193. Residue glutamate 441 coordinates Mg(2+). Serine 467 serves as the catalytic Proton acceptor.

This sequence belongs to the IlvD/Edd family. As to quaternary structure, homodimer. The cofactor is [2Fe-2S] cluster. Mg(2+) is required as a cofactor.

The enzyme catalyses (2R)-2,3-dihydroxy-3-methylbutanoate = 3-methyl-2-oxobutanoate + H2O. It catalyses the reaction (2R,3R)-2,3-dihydroxy-3-methylpentanoate = (S)-3-methyl-2-oxopentanoate + H2O. The protein operates within amino-acid biosynthesis; L-isoleucine biosynthesis; L-isoleucine from 2-oxobutanoate: step 3/4. It functions in the pathway amino-acid biosynthesis; L-valine biosynthesis; L-valine from pyruvate: step 3/4. Its function is as follows. Functions in the biosynthesis of branched-chain amino acids. Catalyzes the dehydration of (2R,3R)-2,3-dihydroxy-3-methylpentanoate (2,3-dihydroxy-3-methylvalerate) into 2-oxo-3-methylpentanoate (2-oxo-3-methylvalerate) and of (2R)-2,3-dihydroxy-3-methylbutanoate (2,3-dihydroxyisovalerate) into 2-oxo-3-methylbutanoate (2-oxoisovalerate), the penultimate precursor to L-isoleucine and L-valine, respectively. The protein is Dihydroxy-acid dehydratase of Trichlorobacter lovleyi (strain ATCC BAA-1151 / DSM 17278 / SZ) (Geobacter lovleyi).